Consider the following 137-residue polypeptide: MLSPKKTKYRKQHRGRMKGKAQRGNKIAYGGFALQAIQPCWITSRQIEAGRRVLTRFVRRGGKLWIRIFPDKPITMRASGTRMGSGKGSPQYWVAVVKPGRILYEIKGISIKLATRALKIAGYKMPIQTKILKPFEN.

The interval 1–21 is disordered; that stretch reads MLSPKKTKYRKQHRGRMKGKA.

This sequence belongs to the universal ribosomal protein uL16 family. Part of the 50S ribosomal subunit.

It localises to the plastid. The protein localises to the chloroplast. The polypeptide is Large ribosomal subunit protein uL16c (Oedogonium cardiacum (Filamentous green alga)).